The chain runs to 908 residues: Mycobactin import ATP-binding/permease protein IrtA (908 aa).

The Cytoplasmic segment spans residues Met1–Pro329. The FAD-binding FR-type domain occupies Ala15–Glu124. The tract at residues Arg16 to Ala245 is siderophore interaction domain. Residues Arg70–Thr73, Asp87–His91, Ala97–Ser98, and Thr241–Gly243 contribute to the FAD site. The segment at Ala245–Arg311 is disordered. The segment covering Thr253–Pro309 has biased composition (low complexity). Residues Leu330–Leu350 traverse the membrane as a helical segment. The ABC transmembrane type-1 domain occupies Ile331–Thr613. Residues Leu351–Gly371 lie on the Periplasmic side of the membrane. The chain crosses the membrane as a helical span at residues Leu372–Leu392. The Cytoplasmic segment spans residues His393 to His444. A helical transmembrane segment spans residues Ala445 to Val465. The Periplasmic segment spans residues Ala466–Arg469. The helical transmembrane segment at Val470 to Ile490 threads the bilayer. Topologically, residues Gln491–Asp557 are cytoplasmic. The chain crosses the membrane as a helical span at residues Leu558–Val578. Residues Thr579–Asn586 are Periplasmic-facing. Residues Leu587–Gly607 traverse the membrane as a helical segment. At Leu608–Arg908 the chain is on the cytoplasmic side. Residues Val654–Ser887 enclose the ABC transporter domain. Residue Gly687–Ser694 coordinates ATP.

The protein belongs to the ABC transporter superfamily. Siderophore-Fe(3+) uptake transporter (SIUT) (TC 3.A.1.21) family. Forms a heterodimer with IrtB. FAD serves as cofactor.

The protein localises to the cell inner membrane. Its activity is regulated as follows. The ATPase activity of IrtAB is stimulated more than 38-fold in the presence of Fe-MBT, and more than 10-fold in the presence of Fe-cMBT. Functionally, part of the ABC transporter complex IrtAB involved in the import of iron-bound mycobactin (Fe-MBT) and carboxymycobactin (Fe-cMBT). Has a preference for Fe-MBT over Fe-cMBT. Mycobactins are then reduced by the siderophore interaction domain to facilitate iron release in the bacterial cell. Transmembrane domains (TMD) form a pore in the membrane and the ATP-binding domain (NBD) is responsible for energy generation. In Mycolicibacterium thermoresistibile (strain ATCC 19527 / DSM 44167 / CIP 105390 / JCM 6362 / NCTC 10409 / 316) (Mycobacterium thermoresistibile), this protein is Mycobactin import ATP-binding/permease protein IrtA.